Here is a 459-residue protein sequence, read N- to C-terminus: UDP-N-acetylmuramate--L-alanine ligase (459 aa).

113–119 is a binding site for ATP; that stretch reads GSHGKTT.

Belongs to the MurCDEF family.

The protein localises to the cytoplasm. The catalysed reaction is UDP-N-acetyl-alpha-D-muramate + L-alanine + ATP = UDP-N-acetyl-alpha-D-muramoyl-L-alanine + ADP + phosphate + H(+). It participates in cell wall biogenesis; peptidoglycan biosynthesis. Functionally, cell wall formation. The protein is UDP-N-acetylmuramate--L-alanine ligase of Persephonella marina (strain DSM 14350 / EX-H1).